The following is a 514-amino-acid chain: Glutamyl-tRNA(Gln) amidotransferase subunit B, mitochondrial (514 aa).

It belongs to the GatB/GatE family. GatB subfamily. As to quaternary structure, subunit of the heterotrimeric GatCAB amidotransferase (AdT) complex, composed of A, B and C subunits.

It is found in the mitochondrion. The catalysed reaction is L-glutamyl-tRNA(Gln) + L-glutamine + ATP + H2O = L-glutaminyl-tRNA(Gln) + L-glutamate + ADP + phosphate + H(+). Allows the formation of correctly charged Gln-tRNA(Gln) through the transamidation of misacylated Glu-tRNA(Gln) in the mitochondria. The reaction takes place in the presence of glutamine and ATP through an activated gamma-phospho-Glu-tRNA(Gln). The sequence is that of Glutamyl-tRNA(Gln) amidotransferase subunit B, mitochondrial from Naegleria gruberi (Amoeba).